The chain runs to 139 residues: D-ribose pyranase (139 aa).

The Proton donor role is filled by His20. Substrate-binding positions include Asp28, His106, and 128–130 (YAN).

The protein belongs to the RbsD / FucU family. RbsD subfamily. Homodecamer.

Its subcellular location is the cytoplasm. It catalyses the reaction beta-D-ribopyranose = beta-D-ribofuranose. It functions in the pathway carbohydrate metabolism; D-ribose degradation; D-ribose 5-phosphate from beta-D-ribopyranose: step 1/2. Catalyzes the interconversion of beta-pyran and beta-furan forms of D-ribose. In Histophilus somni (strain 2336) (Haemophilus somnus), this protein is D-ribose pyranase.